Here is a 234-residue protein sequence, read N- to C-terminus: Uridylate kinase (234 aa).

9-12 (KLSG) provides a ligand contact to ATP. Glycine 51 is a UMP binding site. The ATP site is built by glycine 52 and arginine 56. UMP is bound by residues aspartate 71 and 132-139 (CGNPFFTT). Residues threonine 159, tyrosine 165, and aspartate 168 each coordinate ATP.

The protein belongs to the UMP kinase family. Homohexamer.

The protein resides in the cytoplasm. The catalysed reaction is UMP + ATP = UDP + ADP. It participates in pyrimidine metabolism; CTP biosynthesis via de novo pathway; UDP from UMP (UMPK route): step 1/1. With respect to regulation, inhibited by UTP. Functionally, catalyzes the reversible phosphorylation of UMP to UDP. The sequence is that of Uridylate kinase from Prochlorococcus marinus (strain MIT 9515).